A 516-amino-acid polypeptide reads, in one-letter code: Beta-glucosidase 1 (516 aa).

An N-terminal signal peptide occupies residues 1 to 21 (MGHRLVVVLLLALLVAGAARA). A beta-D-glucoside is bound at residue glutamine 68. N-linked (GlcNAc...) asparagine glycosylation occurs at asparagine 96. A beta-D-glucoside-binding positions include histidine 169 and 214-215 (NE). Glutamate 215 serves as the catalytic Proton donor. The cysteines at positions 234 and 237 are disulfide-linked. Asparagine 290 is a glycosylation site (N-linked (GlcNAc...) asparagine). Tyrosine 353 contributes to the a beta-D-glucoside binding site. Residue asparagine 364 is glycosylated (N-linked (GlcNAc...) asparagine). Position 424 (glutamate 424) interacts with a beta-D-glucoside. Glutamate 424 functions as the Nucleophile in the catalytic mechanism. An N-linked (GlcNAc...) asparagine glycan is attached at asparagine 432. Residues tryptophan 471, 478-479 (EW), and phenylalanine 487 each bind a beta-D-glucoside.

Belongs to the glycosyl hydrolase 1 family.

The enzyme catalyses Hydrolysis of terminal, non-reducing beta-D-glucosyl residues with release of beta-D-glucose.. The protein is Beta-glucosidase 1 (BGLU1) of Oryza sativa subsp. japonica (Rice).